Reading from the N-terminus, the 364-residue chain is Flagellar P-ring protein (364 aa).

The first 29 residues, 1 to 29 (MKTIGGKVFRHAAILAACVLPLWCQPALA), serve as a signal peptide directing secretion.

Belongs to the FlgI family. The basal body constitutes a major portion of the flagellar organelle and consists of four rings (L,P,S, and M) mounted on a central rod.

Its subcellular location is the periplasm. It is found in the bacterial flagellum basal body. In terms of biological role, assembles around the rod to form the L-ring and probably protects the motor/basal body from shearing forces during rotation. The chain is Flagellar P-ring protein from Dechloromonas aromatica (strain RCB).